The following is a 570-amino-acid chain: Urease subunit alpha (570 aa).

Residues 131 to 570 enclose the Urease domain; the sequence is GGFDSHIHFI…LPMAQRYFLF (440 aa). Ni(2+)-binding residues include His-136, His-138, and Lys-219. N6-carboxylysine is present on Lys-219. His-221 provides a ligand contact to substrate. His-248 and His-274 together coordinate Ni(2+). The active-site Proton donor is His-322. Position 362 (Asp-362) interacts with Ni(2+).

The protein belongs to the metallo-dependent hydrolases superfamily. Urease alpha subunit family. In terms of assembly, heterotrimer of UreA (gamma), UreB (beta) and UreC (alpha) subunits. Three heterotrimers associate to form the active enzyme. Requires Ni cation as cofactor. Post-translationally, carboxylation allows a single lysine to coordinate two nickel ions.

The protein resides in the cytoplasm. The catalysed reaction is urea + 2 H2O + H(+) = hydrogencarbonate + 2 NH4(+). Its pathway is nitrogen metabolism; urea degradation; CO(2) and NH(3) from urea (urease route): step 1/1. This is Urease subunit alpha from Beijerinckia indica subsp. indica (strain ATCC 9039 / DSM 1715 / NCIMB 8712).